A 519-amino-acid chain; its full sequence is Chaperone SurA (519 aa).

An N-terminal signal peptide occupies residues 1–31 (MMRSLHSLRRMSGTVLALMLAAGLPLSAAQA). Low complexity-rich tracts occupy residues 31 to 45 (AQPA…QKPA) and 197 to 207 (PAAAQATRAPA). 2 disordered regions span residues 31-50 (AQPA…PAPS) and 196-221 (NPAA…PAQS). Positions 223–324 (PAMLVLAQIL…NGFHILKVVD (102 aa)) constitute a PpiC 1 domain. A disordered region spans residues 328–361 (GGQPAQAARPAPAPAPQQPSSFQEGPSVAAPQGP). Positions 364–463 (VTQTHARHIL…FGWHLIQVLE (100 aa)) constitute a PpiC 2 domain.

It localises to the periplasm. The catalysed reaction is [protein]-peptidylproline (omega=180) = [protein]-peptidylproline (omega=0). In terms of biological role, chaperone involved in the correct folding and assembly of outer membrane proteins. Recognizes specific patterns of aromatic residues and the orientation of their side chains, which are found more frequently in integral outer membrane proteins. May act in both early periplasmic and late outer membrane-associated steps of protein maturation. This is Chaperone SurA from Bordetella pertussis (strain Tohama I / ATCC BAA-589 / NCTC 13251).